Reading from the N-terminus, the 252-residue chain is Hydroxyacylglutathione hydrolase (252 aa).

Zn(2+) is bound by residues His54, His56, Asp58, His59, His113, Asp132, and His170.

Belongs to the metallo-beta-lactamase superfamily. Glyoxalase II family. In terms of assembly, monomer. Zn(2+) is required as a cofactor.

It carries out the reaction an S-(2-hydroxyacyl)glutathione + H2O = a 2-hydroxy carboxylate + glutathione + H(+). Its pathway is secondary metabolite metabolism; methylglyoxal degradation; (R)-lactate from methylglyoxal: step 2/2. Thiolesterase that catalyzes the hydrolysis of S-D-lactoyl-glutathione to form glutathione and D-lactic acid. The polypeptide is Hydroxyacylglutathione hydrolase (Synechococcus sp. (strain JA-3-3Ab) (Cyanobacteria bacterium Yellowstone A-Prime)).